Reading from the N-terminus, the 325-residue chain is MYASKLKKGDEIRIVSPATSMSILSNEAKIQAKTALERLGYRVTIAEHANECNEFDSSSIESRVHDLHAAFFDPGVKAILTTLGGFNSNQLLRYLDYEKIKRHPKILCGYSDITALCNAIYQKTGLVTYSGPHFSTFAMKKGLDYTEEYFLSCCASDDPFEIHPSSEWSDDRWFLDQENRRFYPNNGPVVIQEGYAEGTLIGGNLCTLNLLQGTEYFPETEHTILLIEDDYMSDIHMFDRDLQSLIHLPAFSHVKAILIGRFQKASNVSIDLVKAMIETKKELSGIPIIANINAGHTSPIATFPIGGTCRIEAISGTSRIWIDKH.

The active-site Nucleophile is serine 111. Catalysis depends on charge relay system residues glutamate 228 and histidine 296.

The protein belongs to the peptidase S66 family.

The chain is Putative carboxypeptidase YocD (yocD) from Bacillus subtilis (strain 168).